Here is a 522-residue protein sequence, read N- to C-terminus: Target of rapamycin complex 2 subunit MAPKAP1 (522 aa).

An N-acetylalanine modification is found at A2. The interaction with MAP3K2 stretch occupies residues A2–H184. Residues A2–K267 form an interaction with NBN region. The interval L38–G59 is disordered. T86 carries the phosphothreonine; by PKB/AKT1 and RPS6KB1 modification. The residue at position 128 (S128) is a Phosphoserine; by PKC. The 129-residue stretch at Q139–K267 folds into the CRIM domain. A phosphoserine mark is found at S186, S315, and S356. The interval L279 to R353 is SIN1-type RBD. In terms of domain architecture, SIN1-type PH spans H382–E487. R393 lines the a 1,2-diacyl-sn-glycero-3-phospho-(1D-myo-inositol-3,4,5-trisphosphate) pocket. The residue at position 398 (T398) is a Phosphothreonine; by RPS6KB1. The a 1,2-diacyl-sn-glycero-3-phospho-(1D-myo-inositol-3,4,5-trisphosphate) site is built by K428 and K464. The tract at residues F468–Q522 is interaction with ATF2. S510 carries the post-translational modification Phosphoserine.

Belongs to the SIN1 family. As to quaternary structure, component of the mechanistic target of rapamycin complex 2 (mTORC2), consisting in two heterotretramers composed of MTOR, MLST8, RICTOR and MAPKAP1/SIN1. The mTORC2 core complex associates with PRR5/PROTOR1 and/or PRR5L/PROTOR2. Contrary to mTORC1, mTORC2 does not bind to and is not sensitive to FKBP12-rapamycin. Interacts with MAP3K2. Interacts with ATF2. Interacts with MAPK8. Interacts with GTP-bound HRAS and KRAS; inhibiting their activity. Interacts with IFNAR2. Post-translationally, phosphorylation at Ser-128 by PKC promotes relocalization to the perinuclear region, where the mTORC2 complex specifically mediates phosphorylation of SGK1. Phosphorylated at Thr-86 by AKT1 or RPS6KB1 in the presence of growth factors; the effect of this phosphorylation is however unclear. According to two studies, phosphorylation at Thr-86 by AKT1 is part of a positive feedback loop that increases mTORC2 activation. According to another study, phosphorylation at Thr-86 and Thr-398 by RPS6KB1 promotes dissociation from the mTORC2 complex, leading to inhibit mTORC2 signaling. As to expression, uniquitously expressed, with highest levels in testis, kidney and liver. Present in renal tubule cells (at protein level).

The protein resides in the cell membrane. It localises to the endoplasmic reticulum membrane. The protein localises to the early endosome membrane. Its subcellular location is the late endosome membrane. It is found in the lysosome membrane. The protein resides in the golgi apparatus membrane. It localises to the mitochondrion outer membrane. The protein localises to the cytoplasm. Its subcellular location is the perinuclear region. It is found in the nucleus. Phosphatidylinositol 3,4,5-trisphosphate (PI(3,4,5)P3) promotes MTOR activation by relieving MAPKAP1/SIN1-mediated inhibition of MTOR that takes place in absence of PI(3,4,5)P3. Functionally, component of the mechanistic target of rapamycin complex 2 (mTORC2), which transduces signals from growth factors to pathways involved in proliferation, cytoskeletal organization, lipogenesis and anabolic output. In response to growth factors, mTORC2 phosphorylates and activates AGC protein kinase family members, including AKT (AKT1, AKT2 and AKT3), PKC (PRKCA, PRKCB and PRKCE) and SGK1. In contrast to mTORC1, mTORC2 is nutrient-insensitive. Within the mTORC2 complex, MAPKAP1/SIN1 acts as a substrate adapter which recognizes and binds AGC protein kinase family members for phosphorylation by MTOR. mTORC2 plays a critical role in AKT1 activation by mediating phosphorylation of different sites depending on the context, such as 'Thr-450', 'Ser-473', 'Ser-477' or 'Thr-479', facilitating the phosphorylation of the activation loop of AKT1 on 'Thr-308' by PDPK1/PDK1 which is a prerequisite for full activation. mTORC2 catalyzes the phosphorylation of SGK1 at 'Ser-422' and of PRKCA on 'Ser-657'. The mTORC2 complex also phosphorylates various proteins involved in insulin signaling, such as FBXW8 and IGF2BP1. mTORC2 acts upstream of Rho GTPases to regulate the actin cytoskeleton, probably by activating one or more Rho-type guanine nucleotide exchange factors. mTORC2 promotes the serum-induced formation of stress-fibers or F-actin. MAPKAP1 inhibits MAP3K2 by preventing its dimerization and autophosphorylation. Inhibits HRAS and KRAS independently of mTORC2 complex. Enhances osmotic stress-induced phosphorylation of ATF2 and ATF2-mediated transcription. Involved in ciliogenesis, regulates cilia length through its interaction with CCDC28B independently of mTORC2 complex. This is Target of rapamycin complex 2 subunit MAPKAP1 from Mus musculus (Mouse).